A 303-amino-acid chain; its full sequence is UDP-3-O-acyl-N-acetylglucosamine deacetylase (303 aa).

Zn(2+) contacts are provided by histidine 78, histidine 237, and aspartate 241. Histidine 264 acts as the Proton donor in catalysis.

The protein belongs to the LpxC family. The cofactor is Zn(2+).

It carries out the reaction a UDP-3-O-[(3R)-3-hydroxyacyl]-N-acetyl-alpha-D-glucosamine + H2O = a UDP-3-O-[(3R)-3-hydroxyacyl]-alpha-D-glucosamine + acetate. Its pathway is glycolipid biosynthesis; lipid IV(A) biosynthesis; lipid IV(A) from (3R)-3-hydroxytetradecanoyl-[acyl-carrier-protein] and UDP-N-acetyl-alpha-D-glucosamine: step 2/6. Catalyzes the hydrolysis of UDP-3-O-myristoyl-N-acetylglucosamine to form UDP-3-O-myristoylglucosamine and acetate, the committed step in lipid A biosynthesis. This Pseudomonas savastanoi pv. phaseolicola (strain 1448A / Race 6) (Pseudomonas syringae pv. phaseolicola (strain 1448A / Race 6)) protein is UDP-3-O-acyl-N-acetylglucosamine deacetylase.